A 243-amino-acid polypeptide reads, in one-letter code: Pyridoxine 5'-phosphate synthase (243 aa).

Residue N9 participates in 3-amino-2-oxopropyl phosphate binding. 11–12 (DH) is a binding site for 1-deoxy-D-xylulose 5-phosphate. R20 provides a ligand contact to 3-amino-2-oxopropyl phosphate. H45 acts as the Proton acceptor in catalysis. Positions 47 and 52 each coordinate 1-deoxy-D-xylulose 5-phosphate. E72 serves as the catalytic Proton acceptor. T102 is a 1-deoxy-D-xylulose 5-phosphate binding site. H193 functions as the Proton donor in the catalytic mechanism. Residues G194 and 215-216 (GH) contribute to the 3-amino-2-oxopropyl phosphate site.

The protein belongs to the PNP synthase family. As to quaternary structure, homooctamer; tetramer of dimers.

The protein resides in the cytoplasm. The catalysed reaction is 3-amino-2-oxopropyl phosphate + 1-deoxy-D-xylulose 5-phosphate = pyridoxine 5'-phosphate + phosphate + 2 H2O + H(+). It functions in the pathway cofactor biosynthesis; pyridoxine 5'-phosphate biosynthesis; pyridoxine 5'-phosphate from D-erythrose 4-phosphate: step 5/5. In terms of biological role, catalyzes the complicated ring closure reaction between the two acyclic compounds 1-deoxy-D-xylulose-5-phosphate (DXP) and 3-amino-2-oxopropyl phosphate (1-amino-acetone-3-phosphate or AAP) to form pyridoxine 5'-phosphate (PNP) and inorganic phosphate. The polypeptide is Pyridoxine 5'-phosphate synthase (Escherichia coli O6:H1 (strain CFT073 / ATCC 700928 / UPEC)).